The chain runs to 625 residues: Phosphomethylpyrimidine synthase (625 aa).

Substrate contacts are provided by residues asparagine 230, methionine 259, tyrosine 288, histidine 324, 344–346 (SRG), 385–388 (DGLR), and glutamate 424. Zn(2+) is bound at residue histidine 428. Tyrosine 451 contacts substrate. Histidine 492 serves as a coordination point for Zn(2+). [4Fe-4S] cluster-binding residues include cysteine 572, cysteine 575, and cysteine 580.

It belongs to the ThiC family. Homodimer. [4Fe-4S] cluster serves as cofactor.

The enzyme catalyses 5-amino-1-(5-phospho-beta-D-ribosyl)imidazole + S-adenosyl-L-methionine = 4-amino-2-methyl-5-(phosphooxymethyl)pyrimidine + CO + 5'-deoxyadenosine + formate + L-methionine + 3 H(+). Its pathway is cofactor biosynthesis; thiamine diphosphate biosynthesis. Its function is as follows. Catalyzes the synthesis of the hydroxymethylpyrimidine phosphate (HMP-P) moiety of thiamine from aminoimidazole ribotide (AIR) in a radical S-adenosyl-L-methionine (SAM)-dependent reaction. The polypeptide is Phosphomethylpyrimidine synthase (Xanthomonas axonopodis pv. citri (strain 306)).